A 259-amino-acid chain; its full sequence is GTP cyclohydrolase FolE2 (259 aa).

The protein belongs to the GTP cyclohydrolase IV family.

The catalysed reaction is GTP + H2O = 7,8-dihydroneopterin 3'-triphosphate + formate + H(+). It participates in cofactor biosynthesis; 7,8-dihydroneopterin triphosphate biosynthesis; 7,8-dihydroneopterin triphosphate from GTP: step 1/1. Functionally, converts GTP to 7,8-dihydroneopterin triphosphate. The chain is GTP cyclohydrolase FolE2 from Thermosipho africanus (strain TCF52B).